The chain runs to 396 residues: Cytochrome b (396 aa).

A run of 4 helical transmembrane segments spans residues 37-57 (FGSLLSLCLILQIITGLILAM), 81-102 (WLMRNLHANGASMFFICIYAHI), 117-137 (WNVGVILFALTAATAFVGYVL), and 182-202 (FFTFHFILPFILAAMTMIHIM). The heme b site is built by histidine 87 and histidine 101. 2 residues coordinate heme b: histidine 186 and histidine 200. Residue histidine 205 participates in a ubiquinone binding. A run of 4 helical transmembrane segments spans residues 230–250 (FKDIFGFVILLGVLFMISLLP), 292–312 (LGGVMALAAAIMILLVIPFTH), 324–344 (LAQVTFWILIADLALLTWLGG), and 351–371 (FILMTQIASTVYFMIFILIFP).

It belongs to the cytochrome b family. The cytochrome bc1 complex contains 3 respiratory subunits (MT-CYB, CYC1 and UQCRFS1), 2 core proteins (UQCRC1 and UQCRC2) and probably 6 low-molecular weight proteins. Requires heme b as cofactor.

It is found in the mitochondrion inner membrane. In terms of biological role, component of the ubiquinol-cytochrome c reductase complex (complex III or cytochrome b-c1 complex) that is part of the mitochondrial respiratory chain. The b-c1 complex mediates electron transfer from ubiquinol to cytochrome c. Contributes to the generation of a proton gradient across the mitochondrial membrane that is then used for ATP synthesis. In Lampetra fluviatilis (European river lamprey), this protein is Cytochrome b (mt-cyb).